The chain runs to 473 residues: UDP-glycosyltransferase 71A27 (473 aa).

Residue His-15 is the Proton acceptor of the active site. An anthocyanidin is bound at residue His-15. Residue Asp-117 is the Charge relay of the active site. Positions 345, 347, 362, 365, 366, 367, and 370 each coordinate UDP-alpha-D-glucose. Gly-385 is a binding site for an anthocyanidin. 2 residues coordinate UDP-alpha-D-glucose: Glu-386 and Gln-387.

The protein belongs to the UDP-glycosyltransferase family.

It carries out the reaction (20S)-protopanaxadiol + UDP-alpha-D-glucose = (20S)-ginsenoside C-K + UDP + H(+). It participates in secondary metabolite biosynthesis; terpenoid biosynthesis. Component of the triterpene saponins (e.g. PPD-type ginsenosides or panaxosides) biosynthetic pathways. Glycosyltransferase that catalyzes the biosynthesis of compound K from protopanaxadiol (PPD). The polypeptide is UDP-glycosyltransferase 71A27 (Panax ginseng (Korean ginseng)).